Reading from the N-terminus, the 196-residue chain is Pycsar effector protein GmPycTM (196 aa).

3 helical membrane-spanning segments follow: residues 34-54 (ISFS…SGII), 82-102 (ITTI…TYLF), and 176-196 (VNWL…FLFL).

The protein resides in the cell inner membrane. Functionally, pycsar (pyrimidine cyclase system for antiphage resistance) provides immunity against bacteriophage. The pyrimidine cyclase (PycC) synthesizes cyclic nucleotides in response to infection; these serve as specific second messenger signals. The signals activate the adjacent effector, leading to bacterial cell death and abortive phage infection. A clade C Pycsar system. The effector gene of a two-gene Pycsar system. Expression of this and adjacent uridylate cyclase GmPycC (AC P0DV42) probably confers resistance to bacteriophage. The genes are probably only expressed in response to bacteriophage infection. Probably only responds to cUMP (produced by its cognate NTP cyclase), acts by impairing membrane integrity. The protein is Pycsar effector protein GmPycTM of Gulbenkiania mobilis.